Reading from the N-terminus, the 188-residue chain is Marginal zone B- and B1-cell-specific protein (188 aa).

An N-terminal signal peptide occupies residues 1–21; it reads MRLPLPLLLLFGCRAILGSFG. 3 disulfides stabilise this stretch: cysteine 49-cysteine 177, cysteine 52-cysteine 170, and cysteine 94-cysteine 142. A Prevents secretion from ER motif is present at residues 185–188; the sequence is REEL.

Belongs to the MZB1 family. In terms of assembly, part of the ER chaperone complex, a multi-protein complex in the endoplasmic reticulum containing a large number of molecular chaperones which associates with unassembled incompletely folded immunoglobulin heavy chains. Interacts with HSP90B1 and PDIA3 in a calcium-dependent manner. Post-translationally, forms an interchain disulfide bond with IgM monomers.

It localises to the endoplasmic reticulum lumen. The protein resides in the secreted. In terms of biological role, associates with immunoglobulin M (IgM) heavy and light chains and promotes IgM assembly and secretion. May exert its effect by acting as a molecular chaperone or as an oxidoreductase as it displays a low level of oxidoreductase activity. Helps to diversify peripheral B-cell functions by regulating Ca(2+) stores, antibody secretion, and integrin activation. Acts as a hormone-regulated adipokine/pro-inflammatory cytokine that is implicated in causing chronic inflammation, affecting cellular expansion and blunting insulin response in adipocytes. May have a role in the onset of insulin resistance. This is Marginal zone B- and B1-cell-specific protein (Mzb1) from Rattus norvegicus (Rat).